Reading from the N-terminus, the 436-residue chain is 3-ketoacyl-CoA thiolase (436 aa).

Residue cysteine 99 is the Acyl-thioester intermediate of the active site. Catalysis depends on proton acceptor residues histidine 392 and cysteine 422.

It belongs to the thiolase-like superfamily. Thiolase family. As to quaternary structure, heterotetramer of two alpha chains (FadJ) and two beta chains (FadI).

It is found in the cytoplasm. The catalysed reaction is an acyl-CoA + acetyl-CoA = a 3-oxoacyl-CoA + CoA. Its pathway is lipid metabolism; fatty acid beta-oxidation. Catalyzes the final step of fatty acid oxidation in which acetyl-CoA is released and the CoA ester of a fatty acid two carbons shorter is formed. This Salmonella paratyphi C (strain RKS4594) protein is 3-ketoacyl-CoA thiolase.